A 269-amino-acid polypeptide reads, in one-letter code: Shikimate dehydrogenase (NADP(+)) (269 aa).

Residues serine 17–serine 19 and threonine 64 contribute to the shikimate site. Lysine 68 (proton acceptor) is an active-site residue. Aspartate 80 provides a ligand contact to NADP(+). Asparagine 89 and aspartate 105 together coordinate shikimate. Residues glycine 130–alanine 134, asparagine 154–lysine 159, and methionine 213 contribute to the NADP(+) site. Residue tyrosine 215 participates in shikimate binding. Glycine 237 contributes to the NADP(+) binding site.

This sequence belongs to the shikimate dehydrogenase family. As to quaternary structure, homodimer.

It catalyses the reaction shikimate + NADP(+) = 3-dehydroshikimate + NADPH + H(+). It functions in the pathway metabolic intermediate biosynthesis; chorismate biosynthesis; chorismate from D-erythrose 4-phosphate and phosphoenolpyruvate: step 4/7. Involved in the biosynthesis of the chorismate, which leads to the biosynthesis of aromatic amino acids. Catalyzes the reversible NADPH linked reduction of 3-dehydroshikimate (DHSA) to yield shikimate (SA). In Neisseria meningitidis serogroup C (strain 053442), this protein is Shikimate dehydrogenase (NADP(+)).